Consider the following 178-residue polypeptide: TITEETTGFFALGSGPARALSRVEDLFKELNYADQGPNTALVIEGDKAPPAAVIENIAKHCGINPKGLSILYATTWSLAGTVQIAARVLEVAMHKAHALHFALENIIDGTATTPIAPPFPDFVKAMGRTNDAIIYGGRAHLFVKGTDAEAKRLAEGLPSSTCASFGKPFAEIFADVNG.

This sequence belongs to the MCH family.

Its subcellular location is the cytoplasm. The catalysed reaction is 5,10-methenyl-5,6,7,8-tetrahydromethanopterin + H2O = N(5)-formyl-5,6,7,8-tetrahydromethanopterin + H(+). It functions in the pathway one-carbon metabolism; formaldehyde degradation; formate from formaldehyde (H(4)MPT route): step 3/5. Functionally, catalyzes the hydrolysis of methenyl-H(4)MPT(+) to 5-formyl-H(4)MPT. This Hyphomicrobium methylovorum protein is Methenyltetrahydromethanopterin cyclohydrolase (mch).